The chain runs to 463 residues: Exodeoxyribonuclease 7 large subunit (463 aa).

This sequence belongs to the XseA family. As to quaternary structure, heterooligomer composed of large and small subunits.

It is found in the cytoplasm. The enzyme catalyses Exonucleolytic cleavage in either 5'- to 3'- or 3'- to 5'-direction to yield nucleoside 5'-phosphates.. Bidirectionally degrades single-stranded DNA into large acid-insoluble oligonucleotides, which are then degraded further into small acid-soluble oligonucleotides. This is Exodeoxyribonuclease 7 large subunit from Klebsiella pneumoniae (strain 342).